Here is a 362-residue protein sequence, read N- to C-terminus: Neisseria adhesin A (362 aa).

The signal sequence occupies residues M1–A23. Residues A24–E169 are head domain. Coiled coils occupy residues V90–L146 and N183–R288. The segment at A170–G307 is coiled stalk domain. Transmembrane regions (beta stranded) follow at residues G307–G317, E321–F332, K339–G345, and S351–W362. The segment at R308–W362 is translocator domain.

It belongs to the autotransporter-2 (AT-2) (TC 1.B.40) family. Forms high molecular weight oligomers in whole cell extracts that are not disrupted by boiling in SDS buffer. Homotrimer. A fragment containing the N-terminal half of the mature protein (residues 24-210, head domain plus part of the stalk) binds human integrin beta-1 (ITGB1). It was not seen to bind immobilized purified CEACAMs 1, 3, 5, 6 or 8 nor commercially prepared type I collagen, fibronectin or matrigel.

It localises to the cell surface. It is found in the cell outer membrane. In terms of biological role, adheres to and induces bacterial uptake by human epithelial cells. Upon expression in engineered Y.enterocolitica confers an 11- to 15-fold increase in bacterial adherence and uptake by human epithelial cell lines; part of the uptake is mediated by integrin beta-1 (ITGB1) suggesting it may be a human receptor for NadA. A bacterial cell surface protein; antisera against this protein induce complement-mediated killing of this and other strains. This is Neisseria adhesin A from Neisseria meningitidis serogroup B (strain ATCC BAA-335 / MC58).